Reading from the N-terminus, the 170-residue chain is Large ribosomal subunit protein uL18c (170 aa).

A chloroplast-targeting transit peptide spans 1 to 63 (MLASPALAGA…QADRIARHVR (63 aa)).

It belongs to the universal ribosomal protein uL18 family. In terms of assembly, part of the 50S ribosomal subunit; contacts the 5S rRNA.

The protein localises to the plastid. It localises to the chloroplast. Its function is as follows. Binds 5S rRNA, forms part of the central protuberance of the 50S subunit. The chain is Large ribosomal subunit protein uL18c (RPL18) from Oryza sativa subsp. japonica (Rice).